The primary structure comprises 298 residues: Elongation factor Ts (298 aa).

Residues 80–83 (TDFV) form an involved in Mg(2+) ion dislocation from EF-Tu region.

It belongs to the EF-Ts family.

It localises to the cytoplasm. In terms of biological role, associates with the EF-Tu.GDP complex and induces the exchange of GDP to GTP. It remains bound to the aminoacyl-tRNA.EF-Tu.GTP complex up to the GTP hydrolysis stage on the ribosome. The sequence is that of Elongation factor Ts from Acidovorax sp. (strain JS42).